Here is a 396-residue protein sequence, read N- to C-terminus: Elongation factor Tu (396 aa).

Residues lysine 10–glutamine 206 form the tr-type G domain. The segment at glycine 19–threonine 26 is G1. A GTP-binding site is contributed by glycine 19–threonine 26. Threonine 26 contributes to the Mg(2+) binding site. A G2 region spans residues glycine 60–serine 64. The tract at residues aspartate 81–glycine 84 is G3. Residues aspartate 81 to histidine 85 and asparagine 136 to aspartate 139 each bind GTP. The tract at residues asparagine 136–aspartate 139 is G4. The G5 stretch occupies residues serine 174–leucine 176.

This sequence belongs to the TRAFAC class translation factor GTPase superfamily. Classic translation factor GTPase family. EF-Tu/EF-1A subfamily. As to quaternary structure, monomer.

It localises to the cytoplasm. The catalysed reaction is GTP + H2O = GDP + phosphate + H(+). Its function is as follows. GTP hydrolase that promotes the GTP-dependent binding of aminoacyl-tRNA to the A-site of ribosomes during protein biosynthesis. The polypeptide is Elongation factor Tu (Stigmatella aurantiaca).